The following is a 509-amino-acid chain: ATP synthase subunit alpha (509 aa).

169–176 (GDRQTGKT) is a binding site for ATP.

This sequence belongs to the ATPase alpha/beta chains family. In terms of assembly, F-type ATPases have 2 components, CF(1) - the catalytic core - and CF(0) - the membrane proton channel. CF(1) has five subunits: alpha(3), beta(3), gamma(1), delta(1), epsilon(1). CF(0) has three main subunits: a(1), b(2) and c(9-12). The alpha and beta chains form an alternating ring which encloses part of the gamma chain. CF(1) is attached to CF(0) by a central stalk formed by the gamma and epsilon chains, while a peripheral stalk is formed by the delta and b chains.

The protein resides in the cell inner membrane. The enzyme catalyses ATP + H2O + 4 H(+)(in) = ADP + phosphate + 5 H(+)(out). Its function is as follows. Produces ATP from ADP in the presence of a proton gradient across the membrane. The alpha chain is a regulatory subunit. This chain is ATP synthase subunit alpha, found in Brucella melitensis biotype 1 (strain ATCC 23456 / CCUG 17765 / NCTC 10094 / 16M).